A 308-amino-acid polypeptide reads, in one-letter code: MTKIAFIGVGKIGQTIAFNTIMDGYADEVMIYDIIPELPEKFEHELRHALASKRLKVELLSTNNLDDVAGADIVVITAGKPRKPGMSRRDLFVDNAKIMMDLANKLPKKNHGAVYIMVSNPVDMMASVFARYSREFVISTGDQVETMRLRAYIAKKLKIPVYRVNGFVGGEHGEDAVVLWSTVTVNGKPFSEDLGVTKAEVEDYVKKIPGEIIRVMGGTTWGPGTIIAELIRAVALNENKVMSIATPRQFEDEIIHVSVPTVVGSSIGPSLENLLDEKDRWNLMASMKDFYNVYKENLKHLETSIQAQ.

Residues 8-13 (GVGKIG) and D33 each bind NAD(+). Residues R82 and R88 each contribute to the substrate site. NAD(+) is bound by residues N95 and 118-120 (VSN). 2 residues coordinate substrate: N120 and R148. The active-site Proton acceptor is the H172.

This sequence belongs to the LDH/MDH superfamily.

It carries out the reaction (S)-malate + NAD(+) = oxaloacetate + NADH + H(+). Catalyzes the reversible oxidation of malate to oxaloacetate. The sequence is that of Malate dehydrogenase (mdh) from Sulfurisphaera tokodaii (strain DSM 16993 / JCM 10545 / NBRC 100140 / 7) (Sulfolobus tokodaii).